Reading from the N-terminus, the 358-residue chain is Peptide chain release factor 1 (358 aa).

N5-methylglutamine is present on Gln-233.

Belongs to the prokaryotic/mitochondrial release factor family. In terms of processing, methylated by PrmC. Methylation increases the termination efficiency of RF1.

The protein localises to the cytoplasm. Peptide chain release factor 1 directs the termination of translation in response to the peptide chain termination codons UAG and UAA. The chain is Peptide chain release factor 1 from Geobacillus kaustophilus (strain HTA426).